Reading from the N-terminus, the 334-residue chain is Aspartate carbamoyltransferase catalytic subunit (334 aa).

Carbamoyl phosphate is bound by residues Arg-71 and Thr-72. Residue Lys-99 coordinates L-aspartate. Arg-121, His-151, and Gln-154 together coordinate carbamoyl phosphate. Residues Arg-184 and Arg-239 each coordinate L-aspartate. Carbamoyl phosphate contacts are provided by Gly-280 and Pro-281.

This sequence belongs to the aspartate/ornithine carbamoyltransferase superfamily. ATCase family. As to quaternary structure, heterododecamer (2C3:3R2) of six catalytic PyrB chains organized as two trimers (C3), and six regulatory PyrI chains organized as three dimers (R2).

The catalysed reaction is carbamoyl phosphate + L-aspartate = N-carbamoyl-L-aspartate + phosphate + H(+). The protein operates within pyrimidine metabolism; UMP biosynthesis via de novo pathway; (S)-dihydroorotate from bicarbonate: step 2/3. Its function is as follows. Catalyzes the condensation of carbamoyl phosphate and aspartate to form carbamoyl aspartate and inorganic phosphate, the committed step in the de novo pyrimidine nucleotide biosynthesis pathway. This chain is Aspartate carbamoyltransferase catalytic subunit, found in Pseudomonas putida (strain ATCC 47054 / DSM 6125 / CFBP 8728 / NCIMB 11950 / KT2440).